Reading from the N-terminus, the 412-residue chain is Phosphoglycerate kinase, plasmid (412 aa).

Substrate contacts are provided by residues 39-41 (DLN), arginine 55, 78-81 (HLGR), arginine 133, and arginine 166. Residues lysine 217, glutamate 339, and 365–368 (GGDT) contribute to the ATP site.

It belongs to the phosphoglycerate kinase family. As to quaternary structure, monomer.

The protein localises to the cytoplasm. It catalyses the reaction (2R)-3-phosphoglycerate + ATP = (2R)-3-phospho-glyceroyl phosphate + ADP. It participates in carbohydrate biosynthesis; Calvin cycle. The protein is Phosphoglycerate kinase, plasmid (cbbKP) of Cupriavidus necator (strain ATCC 17699 / DSM 428 / KCTC 22496 / NCIMB 10442 / H16 / Stanier 337) (Ralstonia eutropha).